The chain runs to 620 residues: Endoglucanase 10 (620 aa).

The disordered stretch occupies residues 1–26 (MFGRDPWGGPLEISNADSATDDDRSR). The helical; Signal-anchor for type II membrane protein transmembrane segment at 72–92 (IFMWTVGTILGVGLFIGFVMM) threads the bilayer. The active-site Nucleophile is the Asp165. Residues Asn216, Asn314, Asn323, Asn344, Asn408, and Asn425 are each glycosylated (N-linked (GlcNAc...) asparagine). Active-site residues include His513 and Asp561. A glycan (N-linked (GlcNAc...) asparagine) is linked at Asn567. Glu570 is an active-site residue.

The protein belongs to the glycosyl hydrolase 9 (cellulase E) family. As to expression, ubiquitous.

The protein localises to the membrane. It carries out the reaction Endohydrolysis of (1-&gt;4)-beta-D-glucosidic linkages in cellulose, lichenin and cereal beta-D-glucans.. The polypeptide is Endoglucanase 10 (GLU2) (Oryza sativa subsp. japonica (Rice)).